A 452-amino-acid chain; its full sequence is Metacaspase-1 (452 aa).

Residues Met1 to Asp97 are disordered. Over residues Gln16–Tyr41 the composition is skewed to low complexity. Residues His238 and Cys294 contribute to the active site.

It belongs to the peptidase C14B family.

Functionally, involved in cell death (apoptosis). The chain is Metacaspase-1 (MCA1) from Eremothecium gossypii (strain ATCC 10895 / CBS 109.51 / FGSC 9923 / NRRL Y-1056) (Yeast).